Here is a 43-residue protein sequence, read N- to C-terminus: Protein PsbN (43 aa).

Residues 7 to 27 (LIIFIASLLLGLTGYSIYTAF) form a helical membrane-spanning segment.

This sequence belongs to the PsbN family.

The protein localises to the plastid. The protein resides in the chloroplast thylakoid membrane. Its function is as follows. May play a role in photosystem I and II biogenesis. This chain is Protein PsbN, found in Guillardia theta (Cryptophyte).